Here is a 902-residue protein sequence, read N- to C-terminus: Transcription factor E2F7 (902 aa).

Phosphoserine is present on serine 96. Residues 143 to 212 (RKQKSLGLLC…VAKNQYGWHG (70 aa)) mediate DNA binding. Residues 253–269 (ERRKDGSPDPRDQHLLD) show a composition bias toward basic and acidic residues. The segment at 253–283 (ERRKDGSPDPRDQHLLDFSESDYPSSSANSR) is disordered. A DNA-binding region spans residues 283–368 (RKDKSLRIMS…GRKPAFKWIG (86 aa)). Serine 411 carries the phosphoserine modification. 3 disordered regions span residues 418–439 (SEKIQRKVNSEPSSPQGGKQGP), 589–627 (LCEERNPLEDDEPAVKRQSREFEDSPLSLVMPKKPSNST), and 665–690 (NGFIASECGNPSRNPDTEKSSNDNEI). Composition is skewed to basic and acidic residues over residues 589 to 611 (LCEERNPLEDDEPAVKRQSREFE) and 679 to 690 (PDTEKSSNDNEI). A Phosphoserine modification is found at serine 832. Positions 844–902 (KAEQSPAPATPKSIQRRHRETFFKTPGSLGDPAFRRERNQSRNTSSAQRRLEISSSGPD) are disordered. The span at 884-902 (SRNTSSAQRRLEISSSGPD) shows a compositional bias: polar residues.

It belongs to the E2F/DP family. In terms of assembly, homodimer and heterodimer: mainly forms homodimers and, to a lesser extent, heterodimers with E2F8. Dimerization is important for DNA-binding. Interacts with HIF1A. Interacts with MN1.

The protein localises to the nucleus. In terms of biological role, atypical E2F transcription factor that participates in various processes such as angiogenesis, polyploidization of specialized cells and DNA damage response. Mainly acts as a transcription repressor that binds DNA independently of DP proteins and specifically recognizes the E2 recognition site 5'-TTTC[CG]CGC-3'. Directly represses transcription of classical E2F transcription factors such as E2F1. Acts as a regulator of S-phase by recognizing and binding the E2-related site 5'-TTCCCGCC-3' and mediating repression of G1/S-regulated genes. Plays a key role in polyploidization of cells in placenta and liver by regulating the endocycle, probably by repressing genes promoting cytokinesis and antagonizing action of classical E2F proteins (E2F1, E2F2 and/or E2F3). Required for placental development by promoting polyploidization of trophoblast giant cells. Also involved in DNA damage response: up-regulated by p53/TP53 following genotoxic stress and acts as a downstream effector of p53/TP53-dependent repression by mediating repression of indirect p53/TP53 target genes involved in DNA replication. Acts as a promoter of sprouting angiogenesis, possibly by acting as a transcription activator: associates with HIF1A, recognizes and binds the VEGFA promoter, which is different from canonical E2 recognition site, and activates expression of the VEGFA gene. Acts as a negative regulator of keratinocyte differentiation. The protein is Transcription factor E2F7 (E2f7) of Rattus norvegicus (Rat).